The sequence spans 333 residues: tRNA uridine(34) hydroxylase (333 aa).

In terms of domain architecture, Rhodanese spans 123–217 (SDPEVILVDT…YLEEIKQEES (95 aa)). Cys-177 functions as the Cysteine persulfide intermediate in the catalytic mechanism.

It belongs to the TrhO family.

It catalyses the reaction uridine(34) in tRNA + AH2 + O2 = 5-hydroxyuridine(34) in tRNA + A + H2O. Functionally, catalyzes oxygen-dependent 5-hydroxyuridine (ho5U) modification at position 34 in tRNAs. This Shewanella sp. (strain MR-7) protein is tRNA uridine(34) hydroxylase.